The following is a 202-amino-acid chain: Recoverin (202 aa).

Glycine 2 is lipidated: N-myristoyl glycine. Cysteine 39 is modified (cysteine sulfenic acid (-SOH)). EF-hand domains lie at 41 to 59, 61 to 96, 97 to 132, and 147 to 182; these read SGRI…FFPD, DPKA…TTAG, KPTQ…IFKM, and TPEK…NKEI. Ca(2+) is bound by residues aspartate 74, asparagine 76, aspartate 78, threonine 80, glutamate 85, aspartate 110, aspartate 112, asparagine 114, threonine 116, and glutamate 121. An interaction with GRK1 region spans residues 189-192; sequence EPQK.

The protein belongs to the recoverin family. Homodimer; disulfide-linked. Homodimerization is caused by prolonged intense illumination. May form a complex composed of RHO, GRK1 and RCVRN in a Ca(2+)-dependent manner; RCVRN prevents the interaction between GRK1 and RHO. Interacts (via C-terminus) with GRK1 (via N-terminus); the interaction is Ca(2+)-dependent. Post-translationally, the N-terminal glycine is linked to one of four different types of acyl groups. The most abundant is myristoleate (14:1), but 14:0, 14:2, and 12:0 acyl residues are also present. The Ca(2+) induced exposure of the myristoyl group, known as the calcium-myristoyl switch, promotes RCVRN binding to the photoreceptor cell membranes only when intracellular Ca(2+) concentration is high. Oxidation on Cys-39 occurs in response to prolonged intense illumination and results in the formation of disulfide homodimers, and to a lesser extent disulfide-linked heterodimers. Expressed in rod photoreceptors in the retina (at protein level).

It is found in the photoreceptor inner segment. It localises to the cell projection. The protein localises to the cilium. The protein resides in the photoreceptor outer segment. Its subcellular location is the photoreceptor outer segment membrane. It is found in the perikaryon. In terms of biological role, acts as a calcium sensor and regulates phototransduction of cone and rod photoreceptor cells. Modulates light sensitivity of cone photoreceptor in dark and dim conditions. In response to high Ca(2+) levels induced by low light levels, prolongs RHO/rhodopsin activation in rod photoreceptor cells by binding to and inhibiting GRK1-mediated phosphorylation of RHO/rhodopsin. Plays a role in scotopic vision/enhances vision in dim light by enhancing signal transfer between rod photoreceptors and rod bipolar cells. Improves rod photoreceptor sensitivity in dim light and mediates response of rod photoreceptors to facilitate detection of change and motion in bright light. The chain is Recoverin (Rcvrn) from Mus musculus (Mouse).